We begin with the raw amino-acid sequence, 1458 residues long: MSGADVESYIFPRIREILTGGISGIREAYINELRVCEKLIQWRNGSDNQVDSTNDASVKGMVFHRVSERNELQNRYAGLYDDLFKLNNNNVDIDVITKHDETIDKIISKELKSKMWYELNDEDIHSSLLPEFQIQTLDDYYDNMKKYLSQDDRDEKGNDNREEEDVKNRNDNVTRIQWQTLMEKDRKVKLHDDLSFSNEVETSLSTYINLRTKEEMDPRYVYHPVPALFITLTLLKVLTGGKAFSYGVRYLEKLCKTISKGERSLATYPAIFGSNGELVATRLYSHYAIKMRLILNNMTYLLTYKSCHEFKDFYIDVNDEVLLYMLENPNGGRDLKKAVTRLNLYYGLRYNPKTTDSLKIIDGVDYHHEHPKYSDRSYDAPIIEPENHFSASEQCYEHNAKLLNQAVYSKTVKEYIDSDIKKVKDLNLPLLTKFTEKLVDMRCNKSIIYDIVFMRTLLNMGGYSRSNQITDFKGTIDDITKMNDEYLSDVSEGGKRAKMSEWMYPKMEACGYGLTKSILNGQMVGVSYPSASESKAHIESYITPNSAGIGNLRFDVDVGGKMYKVRTTSKSAFVNALGTNIFNIDTISMEPMFLSEYLTHLNQDEKMLLYDRRKNRQIQDIELMRLCGQNVIGSRSTTAWRPVRPIYINVIQAHLAQAFIIGPHINATVGRQRTPPKGLWFTGEDVGIGFATIYQNGTSDVISHAIEASASGRCLSVLADCSSWDQTFLTESIIPYYQGIKRAISEFGQADSENYYMYDNQRKDVVGMRLTETIDWFNEYQKKRIFNASYLGERYSFKVQYMWSGRLDTFFMNSVQNALITERIANQVSSSVAGSPSLVWFQVAGDDAIMVYNANSITSSDQVDAIRKTVVDEYTADNHIINPQKTVISHISGEYAKIYYYAGMHFRDPSIQLHESEKISKATNITEVMRGYAQVAFEYNKRAIGSLRINSLYARLLASLAYSINVKRSDDESIENKPNRRGSKAKARSTKTNNLRSFSSVKYYPPLTSVITPTGVKGGLGMSLSGISLNEILMIKELLLDLVEAGLKIVDQVSFEQNEIVSKSLMRHFLRDRKDLIKEMGLDKGTKPVMAVRYRSSDSAFSSGNFENGISMRLESLDSHKLSIARQSEAKLKSVGVNLPKMYTYENLPYSTINQSLKGITIDKDLSRMTNSDLVDQLRSIPESECKGNLISKYPVYGLFNARRIISMDEKVDNPIRYISTPDEGKALERLIGSRTGIQFKNQGYGGSPAIVRFIRRNGLTITEENLIDLVISSGAISLANPKQNMIELFQAISGDQQSSLELANFFMNEKPHWEDKAISITINGSILENCDSRISNISRFVSIDAIRIPGDIKKMFTYIAYVYMCQMFILDENTPSKIHISINEEQLRDFLISAKPISKNRMKQTIDMKFSNQNSGVTIEIDEESLSRTADLDYEVLKLVHPLSVPFLRNLSEGSPM.

Positions Leu148–Asn168 are disordered. The RdRp catalytic domain occupies Val686–Glu894. Residues Asp971–Asn993 form a disordered region. A compositionally biased stretch (basic residues) spans Asn979–Ser989.

The protein belongs to the reoviridae RNA-directed RNA polymerase family.

It is found in the virion. Its subcellular location is the host cytoplasm. It catalyses the reaction RNA(n) + a ribonucleoside 5'-triphosphate = RNA(n+1) + diphosphate. RNA-directed RNA polymerase that is involved in both transcription and genome replication. Together with the capping enzyme P5 and protein P7, forms an enzyme complex positioned near the channels situated at each of the five-fold vertices of the core. In Nephotettix cincticeps (Green rice leafhopper), this protein is RNA-directed RNA polymerase P1.